The chain runs to 118 residues: Ribosome-binding factor A (118 aa).

The protein belongs to the RbfA family. Monomer. Binds 30S ribosomal subunits, but not 50S ribosomal subunits or 70S ribosomes.

It is found in the cytoplasm. One of several proteins that assist in the late maturation steps of the functional core of the 30S ribosomal subunit. Associates with free 30S ribosomal subunits (but not with 30S subunits that are part of 70S ribosomes or polysomes). Required for efficient processing of 16S rRNA. May interact with the 5'-terminal helix region of 16S rRNA. The protein is Ribosome-binding factor A of Dehalococcoides mccartyi (strain ATCC BAA-2100 / JCM 16839 / KCTC 5957 / BAV1).